Reading from the N-terminus, the 103-residue chain is Colicin-V (103 aa).

Residues Met-1–Gly-15 constitute a propeptide that is removed on maturation. Cys-91 and Cys-102 are oxidised to a cystine.

The protein resides in the secreted. Functionally, colicin V kills sensitive cells by disrupting the membrane potential. Colicins are polypeptide toxins produced by, and active against E.coli and closely related bacteria. The protein is Colicin-V (cvaC) of Escherichia coli.